Here is a 1454-residue protein sequence, read N- to C-terminus: Probable cleavage and polyadenylation specificity factor subunit 1 (1454 aa).

Residues 810–843 are disordered; it reads EEKEKKAKQTAAQEKEKETEKKKDDAKNEEDQVN. A compositionally biased stretch (basic and acidic residues) spans 812–843; sequence KEKKAKQTAAQEKEKETEKKKDDAKNEEDQVN.

It belongs to the CPSF1 family. CPSF is a heterotetramer composed of four distinct subunits 160 (cpsf-1), 100 (cpsf-2), 70 (cpsf-3), and 30 kDa (cpsf-4).

The protein localises to the nucleus. Functionally, CPSF plays a key role in pre-mRNA 3'-end formation, recognizing the AAUAAA signal sequence and interacting with poly(A)polymerase and other factors to bring about cleavage and poly(A) addition. This subunit is involved in the RNA recognition step of the polyadenylation reaction. The chain is Probable cleavage and polyadenylation specificity factor subunit 1 from Caenorhabditis briggsae.